Consider the following 607-residue polypeptide: Chaperone protein DnaK (607 aa).

Thr-174 is subject to Phosphothreonine; by autocatalysis. Residues 577 to 594 are compositionally biased toward polar residues; it reads QSAGSTAGNPGQGQSTEN. The interval 577–607 is disordered; the sequence is QSAGSTAGNPGQGQSTENPGGKTIDGDYKVN.

It belongs to the heat shock protein 70 family.

Acts as a chaperone. This Dictyoglomus turgidum (strain DSM 6724 / Z-1310) protein is Chaperone protein DnaK.